A 202-amino-acid polypeptide reads, in one-letter code: Protein-methionine-sulfoxide reductase heme-binding subunit MsrQ (202 aa).

6 consecutive transmembrane segments (helical) span residues 8 to 28 (LAVF…AWIF), 42 to 62 (LGLG…LQKL), 75 to 95 (LGLW…VFIL), 110 to 130 (PYII…ITSN), 147 to 167 (LVYL…RADL), and 169 to 189 (EWTL…PSIA).

Belongs to the MsrQ family. Heterodimer of a catalytic subunit (MsrP) and a heme-binding subunit (MsrQ). The cofactor is FMN. It depends on heme b as a cofactor.

The protein resides in the cell inner membrane. In terms of biological role, part of the MsrPQ system that repairs oxidized periplasmic proteins containing methionine sulfoxide residues (Met-O), using respiratory chain electrons. Thus protects these proteins from oxidative-stress damage caused by reactive species of oxygen and chlorine generated by the host defense mechanisms. MsrPQ is essential for the maintenance of envelope integrity under bleach stress, rescuing a wide series of structurally unrelated periplasmic proteins from methionine oxidation. MsrQ provides electrons for reduction to the reductase catalytic subunit MsrP, using the quinone pool of the respiratory chain. This Pseudomonas aeruginosa (strain LESB58) protein is Protein-methionine-sulfoxide reductase heme-binding subunit MsrQ.